The following is a 440-amino-acid chain: Cell division protein FtsA (440 aa).

The segment at Val396 to Glu440 is disordered.

Belongs to the FtsA/MreB family. Homodimer. Interacts with FtsZ.

Its subcellular location is the cell membrane. Cell division protein that is required for the assembly of the Z ring. May serve as a membrane anchor for the Z ring. Binds and hydrolyzes ATP. Also involved in sporulation. This chain is Cell division protein FtsA, found in Bacillus subtilis (strain 168).